Here is a 453-residue protein sequence, read N- to C-terminus: Exodeoxyribonuclease 7 large subunit (453 aa).

Belongs to the XseA family. In terms of assembly, heterooligomer composed of large and small subunits.

Its subcellular location is the cytoplasm. It catalyses the reaction Exonucleolytic cleavage in either 5'- to 3'- or 3'- to 5'-direction to yield nucleoside 5'-phosphates.. Its function is as follows. Bidirectionally degrades single-stranded DNA into large acid-insoluble oligonucleotides, which are then degraded further into small acid-soluble oligonucleotides. The protein is Exodeoxyribonuclease 7 large subunit of Geobacter metallireducens (strain ATCC 53774 / DSM 7210 / GS-15).